A 339-amino-acid chain; its full sequence is D-erythrose-4-phosphate dehydrogenase (339 aa).

NAD(+) is bound at residue 11-12 (RI). Substrate is bound by residues 153-155 (SCT), Arg-199, 212-213 (TK), and Arg-235. The active-site Nucleophile is the Cys-154. Asn-317 is a binding site for NAD(+).

This sequence belongs to the glyceraldehyde-3-phosphate dehydrogenase family. Epd subfamily. Homotetramer.

The protein localises to the cytoplasm. It carries out the reaction D-erythrose 4-phosphate + NAD(+) + H2O = 4-phospho-D-erythronate + NADH + 2 H(+). Its pathway is cofactor biosynthesis; pyridoxine 5'-phosphate biosynthesis; pyridoxine 5'-phosphate from D-erythrose 4-phosphate: step 1/5. Catalyzes the NAD-dependent conversion of D-erythrose 4-phosphate to 4-phosphoerythronate. This chain is D-erythrose-4-phosphate dehydrogenase, found in Shewanella halifaxensis (strain HAW-EB4).